Consider the following 156-residue polypeptide: Endogenous retrovirus group K member 21 Pro protein (156 aa).

Positions 21–96 (FEGLVDTGAD…IPLNLWGRDL (76 aa)) constitute a Peptidase A2 domain. The active site involves D26. The G-patch domain occupies 111–156 (YSPTSQKIMTKMGYIPGKGLGKNEDGIKVPVEAKINQKREGIGYPF).

The protein belongs to the peptidase A2 family. HERV class-II K(HML-2) subfamily. Active as a homodimer. Autoproteolytically processed at the N-terminus. Expected C-terminal autoprocessing not detected. The sequence shown is that of the processed Pro protein.

The catalysed reaction is Processing at the authentic HIV-1 PR recognition site and release of the mature p17 matrix and the p24 capsid protein, as a result of the cleavage of the -SQNY-|-PIVQ- cleavage site.. In terms of biological role, retroviral proteases have roles in the processing of the primary translation products and the maturation of the viral particle. Endogenous Pro proteins may have kept, lost or modified their original function during evolution. The protein is Endogenous retrovirus group K member 21 Pro protein (ERVK-21) of Homo sapiens (Human).